We begin with the raw amino-acid sequence, 177 residues long: Phycocyanin-645 beta chain (177 aa).

Mesobiliverdin is bound at residue tyrosine 18. 3 residues coordinate (2R,3E)-phycocyanobilin: lysine 28, asparagine 35, and aspartate 39. 15,16-dihydrobiliverdin-binding residues include cysteine 50, aspartate 54, and cysteine 61. Positions 77, 82, 84, and 85 each coordinate (2R,3E)-phycocyanobilin. Glutamine 148 provides a ligand contact to 15,16-dihydrobiliverdin. (2R,3E)-phycocyanobilin-binding residues include proline 154, glycine 156, and cysteine 158.

The protein belongs to the phycobiliprotein family. As to quaternary structure, heterotetramer of 2 different alpha chains and 2 identical beta chains which form 2 alpha-beta heterodimers within the heterotetramer. Contains two phycocyanobilin chromophores, one mesobiliverdin chromophore and one 15,16-dihydrobiliverdin chromophore with binding mediated by both the alpha and beta subunits.

The protein resides in the plastid. It is found in the chloroplast thylakoid membrane. Its function is as follows. Light-harvesting photosynthetic tetrapyrrole chromophore-protein from the phycobiliprotein complex. The chain is Phycocyanin-645 beta chain from Chroomonas sp.